The chain runs to 238 residues: Ribose-5-phosphate isomerase A (238 aa).

Substrate is bound by residues Ser-30–Thr-33, Asp-87–Asp-90, and Lys-100–Gly-103. The active-site Proton acceptor is the Glu-109. Lys-127 provides a ligand contact to substrate.

The protein belongs to the ribose 5-phosphate isomerase family. In terms of assembly, homodimer.

It catalyses the reaction aldehydo-D-ribose 5-phosphate = D-ribulose 5-phosphate. The protein operates within carbohydrate degradation; pentose phosphate pathway; D-ribose 5-phosphate from D-ribulose 5-phosphate (non-oxidative stage): step 1/1. Functionally, catalyzes the reversible conversion of ribose-5-phosphate to ribulose 5-phosphate. The polypeptide is Ribose-5-phosphate isomerase A (Synechococcus sp. (strain WH7803)).